A 247-amino-acid chain; its full sequence is MSKLFWAMLSFITRLPVPRRWSQGLDFEHYSRGIITFPLIGLLLGAISGLVFMVLQAWCGAPLAALFSVLVLVLMTGGFHLDGLADTCDGVFSARSRDRMLEIMRDSRLGTHGGLALIFVVLAKILVLSELALRGEPILASLAAACAVSRGTAALLMYRHRYAREEGLGNVFIGKIDGRQTCVTLGLAAIFAAVLLPGMHGVAAMVVTMVAIFILGQLLKRTLGGQTGDTLGAAIELGELVFLLALL.

5 consecutive transmembrane segments (helical) span residues 34 to 54, 59 to 79, 113 to 133, 138 to 158, and 194 to 214; these read IITF…VFMV, CGAP…TGGF, GGLA…ELAL, ILAS…LLMY, and VLLP…AIFI.

It belongs to the CobS family. Requires Mg(2+) as cofactor.

The protein resides in the cell inner membrane. It carries out the reaction alpha-ribazole + adenosylcob(III)inamide-GDP = adenosylcob(III)alamin + GMP + H(+). It catalyses the reaction alpha-ribazole 5'-phosphate + adenosylcob(III)inamide-GDP = adenosylcob(III)alamin 5'-phosphate + GMP + H(+). Its pathway is cofactor biosynthesis; adenosylcobalamin biosynthesis; adenosylcobalamin from cob(II)yrinate a,c-diamide: step 7/7. Functionally, joins adenosylcobinamide-GDP and alpha-ribazole to generate adenosylcobalamin (Ado-cobalamin). Also synthesizes adenosylcobalamin 5'-phosphate from adenosylcobinamide-GDP and alpha-ribazole 5'-phosphate. This is Adenosylcobinamide-GDP ribazoletransferase from Escherichia coli O157:H7.